Consider the following 57-residue polypeptide: Large ribosomal subunit protein bL32 (57 aa).

This sequence belongs to the bacterial ribosomal protein bL32 family.

The protein is Large ribosomal subunit protein bL32 of Corynebacterium glutamicum (strain R).